The sequence spans 568 residues: PWWP domain-containing protein2 (568 aa).

The segment covering 1–19 has biased composition (basic and acidic residues); it reads MTEIKDSSVKDENPGKQEE. Disordered regions lie at residues 1–126, 213–340, and 465–568; these read MTEI…YKPG, QSTP…DVAK, and IASL…TGQK. A compositionally biased stretch (polar residues) spans 29 to 46; sequence MSTATNNSKNIETTSSNG. Basic and acidic residues-rich tracts occupy residues 48 to 88 and 100 to 122; these read EDIK…KTIE and KSQKSEKSNGNARKETKQSERVN. The PWWP domain maps to 125–189; the sequence is PGMRVLTKMS…SDSLTPLTSE (65 aa). Low complexity predominate over residues 214–228; it reads STPDLDSLSVPSSES. Acidic residues predominate over residues 229-249; that stretch reads EVSEEESDQEMSEPSPIEEDY. Over residues 255–266 the composition is skewed to basic residues; sequence RRITRKGTKKKT. Positions 281-292 are enriched in polar residues; it reads LNASSNVSSNPA. The segment covering 325–336 has biased composition (acidic residues); sequence KEEEEGSVANEE. Basic and acidic residues-rich tracts occupy residues 489–500 and 514–541; these read KQNEDNEDKVKA and DASKDMISEEKSSKDADNSLEVAGKDFA.

The sequence is that of PWWP domain-containing protein2 (pdp2) from Schizosaccharomyces pombe (strain 972 / ATCC 24843) (Fission yeast).